We begin with the raw amino-acid sequence, 92 residues long: Conotoxin Mr15.3 (92 aa).

A signal peptide spans 1-20; it reads MSTLKMMLLILLLLLPMATF. Positions 21–53 are excised as a propeptide; that stretch reads DSDGQAIPGGGIPSAVNSRVRGDEKSGRSLEKR.

It belongs to the conotoxin N superfamily. Post-translationally, contains 4 disulfide bonds. As to expression, expressed by the venom duct.

The protein resides in the secreted. The sequence is that of Conotoxin Mr15.3 from Conus marmoreus (Marble cone).